The following is a 439-amino-acid chain: ATP-dependent RNA helicase SrmB (439 aa).

Residues 4-32 (SQFEQFDLSPELLKALEKKGYSRPTAIQM) carry the Q motif motif. A Helicase ATP-binding domain is found at 35 to 209 (IPAAMEESDV…AERLLNDPVK (175 aa)). Position 48-55 (48-55 (APTGTGKT)) interacts with ATP. The DEAD box motif lies at 157 to 160 (DEAD). Residues 237 to 387 (KLLARFIETE…GLEPRTKPPK (151 aa)) enclose the Helicase C-terminal domain. Residues 381–393 (PRTKPPKDGEVKS) are compositionally biased toward basic and acidic residues. The interval 381-439 (PRTKPPKDGEVKSVSKKQKARIKEKREEKKKTEAKKKVKLRHKDTKNIGKRRKPSNSNV) is disordered. Basic residues-rich tracts occupy residues 394-403 (VSKKQKARIK) and 412-439 (TEAK…NSNV).

It belongs to the DEAD box helicase family. SrmB subfamily. Interacts with the 50S ribosomal subunit.

It is found in the cytoplasm. It carries out the reaction ATP + H2O = ADP + phosphate + H(+). Functionally, DEAD-box RNA helicase involved in the assembly of the 50S ribosomal subunit at low temperature. Exhibits RNA-stimulated ATP hydrolysis and RNA unwinding activity. In Haemophilus influenzae (strain ATCC 51907 / DSM 11121 / KW20 / Rd), this protein is ATP-dependent RNA helicase SrmB.